A 439-amino-acid chain; its full sequence is Na(+)/H(+) antiporter NhaA (439 aa).

11 helical membrane-spanning segments follow: residues 12–32 (SMNI…AIIA), 67–87 (MIEF…GLEI), 103–123 (ALPF…YMSI), 133–153 (GLAI…SLLG), 162–182 (IFLT…IALF), 186–206 (HVSY…YFIG), 214–234 (IFFL…GIHS), 314–334 (ILPL…GELV), 341–361 (VAAG…WLAI), 379–399 (GIAL…NLSF), and 412–432 (FGVL…LRIV).

It belongs to the NhaA Na(+)/H(+) (TC 2.A.33) antiporter family.

The protein localises to the cell inner membrane. The catalysed reaction is Na(+)(in) + 2 H(+)(out) = Na(+)(out) + 2 H(+)(in). Functionally, na(+)/H(+) antiporter that extrudes sodium in exchange for external protons. The chain is Na(+)/H(+) antiporter NhaA from Bacteroides thetaiotaomicron (strain ATCC 29148 / DSM 2079 / JCM 5827 / CCUG 10774 / NCTC 10582 / VPI-5482 / E50).